A 386-amino-acid chain; its full sequence is Meiotic chromosome segregation protein C1539.02 (386 aa).

3 disordered regions span residues 1 to 28 (MNQD…SNKS), 46 to 85 (RALI…SSKQ), and 366 to 386 (DIHE…KTKG). Over residues 15-28 (AETSQLKNFSSNKS) the composition is skewed to polar residues.

It localises to the nucleus. In terms of biological role, required for meiotic chromosome segregation. The protein is Meiotic chromosome segregation protein C1539.02 of Schizosaccharomyces pombe (strain 972 / ATCC 24843) (Fission yeast).